Consider the following 337-residue polypeptide: MTHQVSVLHQDKKFDISLRPKGLREFCGQKQLTERLELFLHAAVQRGEVPGHCLFFGPPGLGKTSLAHIVAHTVGKGLVVASGPQLVKPSDLLGLLTSLQEGDVFFIDEIHRMGKVAEEYLYSAMEDYKIDITIDSGPGARSVSVDLAPFSLVGATTRSGMLSEPLRARFSFTGRMSYYSDEDLTTILKRSSNLLGIDADTAALYEIARRSRGTPRLANNLLRWVRDFAQMREGNCINSDVAEKALAMLLIDDWGLNEIDIKLLTTIIDYYQGGPVGIKTLSVAVGEDIKTLEDVYEPFLILKGLLKKTSRGRMVTQIAYNHLKRCSDNLQSLGEEK.

The interval 1-179 (MTHQVSVLHQ…FSFTGRMSYY (179 aa)) is large ATPase domain (RuvB-L). ATP is bound by residues leucine 18, arginine 19, glycine 60, lysine 63, threonine 64, serine 65, 126–128 (EDY), arginine 169, tyrosine 179, and arginine 216. Position 64 (threonine 64) interacts with Mg(2+). The tract at residues 180–250 (SDEDLTTILK…VAEKALAMLL (71 aa)) is small ATPAse domain (RuvB-S). Positions 253–337 (DWGLNEIDIK…DNLQSLGEEK (85 aa)) are head domain (RuvB-H). 2 residues coordinate DNA: lysine 308 and arginine 313.

It belongs to the RuvB family. As to quaternary structure, homohexamer. Forms an RuvA(8)-RuvB(12)-Holliday junction (HJ) complex. HJ DNA is sandwiched between 2 RuvA tetramers; dsDNA enters through RuvA and exits via RuvB. An RuvB hexamer assembles on each DNA strand where it exits the tetramer. Each RuvB hexamer is contacted by two RuvA subunits (via domain III) on 2 adjacent RuvB subunits; this complex drives branch migration. In the full resolvosome a probable DNA-RuvA(4)-RuvB(12)-RuvC(2) complex forms which resolves the HJ.

The protein localises to the cytoplasm. It catalyses the reaction ATP + H2O = ADP + phosphate + H(+). The RuvA-RuvB-RuvC complex processes Holliday junction (HJ) DNA during genetic recombination and DNA repair, while the RuvA-RuvB complex plays an important role in the rescue of blocked DNA replication forks via replication fork reversal (RFR). RuvA specifically binds to HJ cruciform DNA, conferring on it an open structure. The RuvB hexamer acts as an ATP-dependent pump, pulling dsDNA into and through the RuvAB complex. RuvB forms 2 homohexamers on either side of HJ DNA bound by 1 or 2 RuvA tetramers; 4 subunits per hexamer contact DNA at a time. Coordinated motions by a converter formed by DNA-disengaged RuvB subunits stimulates ATP hydrolysis and nucleotide exchange. Immobilization of the converter enables RuvB to convert the ATP-contained energy into a lever motion, pulling 2 nucleotides of DNA out of the RuvA tetramer per ATP hydrolyzed, thus driving DNA branch migration. The RuvB motors rotate together with the DNA substrate, which together with the progressing nucleotide cycle form the mechanistic basis for DNA recombination by continuous HJ branch migration. Branch migration allows RuvC to scan DNA until it finds its consensus sequence, where it cleaves and resolves cruciform DNA. This is Holliday junction branch migration complex subunit RuvB from Chlamydia caviae (strain ATCC VR-813 / DSM 19441 / 03DC25 / GPIC) (Chlamydophila caviae).